Here is a 508-residue protein sequence, read N- to C-terminus: MGLPWYRVHTVVLNDPGRLLAVHIMHTALVAGWAGSMALYELAVFDPSDPVLDPMWRQGMFVIPFMTRLGITNSWGGWSITGGTITNPGIWSYEGVAGAHIVFSGLCFLAAIWHWVYWDLEIFCDERTGKPSLDLPKIFGIHLFLSGVACFGFGAFHVTGLYGPGIWVSDPYGLTGKVQSVNPAWGVEGFDPFVPGGIASHHIAAGTLGILAGLFHLSVRPPQRLYKGLRMGNIETVLSSSIAAVFFAAFVVAGTMWYGSATTPIELFGPTRYQWDQGYFQQEIYRRVGTGLAENQSLSEAWSKIPEKLAFYDYIGNNPAKGGLFRAGSMDNGDGIAIGWLGHPLFRDKEGRELFVRRMPTFFETFPVVLVDGDGIVRADVPFRRAESKYSVEQVGVTVEFYGGELNGVSYSDPATVKKYARRAQLGEIFELDRATLKSDGVFRSSPRGWFTFGHASFALLFFFGHIWHGSRTLFRDVFAGIDPDLDAQVEFGAFQKLGDPTTRRQVV.

6 helical membrane-spanning segments follow: residues 21–36 (AVHIMHTALVAGWAGS), 101–115 (IVFSGLCFLAAIWHW), 140–156 (GIHLFLSGVACFGFGAF), 203–218 (IAAGTLGILAGLFHLS), 237–252 (VLSSSIAAVFFAAFVV), and 457–472 (SFALLFFFGHIWHGSR).

It belongs to the PsbB/PsbC family. PsbB subfamily. As to quaternary structure, PSII is composed of 1 copy each of membrane proteins PsbA, PsbB, PsbC, PsbD, PsbE, PsbF, PsbH, PsbI, PsbJ, PsbK, PsbL, PsbM, PsbT, PsbX, PsbY, PsbZ, Psb30/Ycf12, at least 3 peripheral proteins of the oxygen-evolving complex and a large number of cofactors. It forms dimeric complexes. Binds multiple chlorophylls. PSII binds additional chlorophylls, carotenoids and specific lipids. serves as cofactor.

It localises to the plastid. The protein localises to the chloroplast thylakoid membrane. In terms of biological role, one of the components of the core complex of photosystem II (PSII). It binds chlorophyll and helps catalyze the primary light-induced photochemical processes of PSII. PSII is a light-driven water:plastoquinone oxidoreductase, using light energy to abstract electrons from H(2)O, generating O(2) and a proton gradient subsequently used for ATP formation. In Populus trichocarpa (Western balsam poplar), this protein is Photosystem II CP47 reaction center protein.